Reading from the N-terminus, the 809-residue chain is Endoplasmin homolog (809 aa).

A signal peptide spans 1–18 (MRKWALSCALLLVLLLTT). Positions 111, 155, 168, and 200 each coordinate ATP. N111 carries N-linked (GlcNAc...) asparagine glycosylation. Residues 293 to 320 (VPADEEESNEEEESTTETTEEEETEDDE) show a composition bias toward acidic residues. The interval 293-329 (VPADEEESNEEEESTTETTEEEETEDDEEKKPKTKTV) is disordered. N410, N450, and N617 each carry an N-linked (GlcNAc...) asparagine glycan. The segment at 766–809 (SLDLSPDAAVEEEEEVEEPEVEEKESAKQEAEEPEHEQYDKDEL) is disordered. Positions 774–788 (AVEEEEEVEEPEVEE) are enriched in acidic residues. Basic and acidic residues predominate over residues 789-809 (KESAKQEAEEPEHEQYDKDEL). Residues 806-809 (KDEL) carry the Prevents secretion from ER motif.

It belongs to the heat shock protein 90 family.

Its subcellular location is the endoplasmic reticulum lumen. Its function is as follows. May have a molecular chaperone role in the processing of secreted materials. The protein is Endoplasmin homolog of Hordeum vulgare (Barley).